The primary structure comprises 277 residues: Myelin proteolipid protein (277 aa).

At 2–10 (GLLECCARC) the chain is on the cytoplasmic side. S-palmitoyl cysteine attachment occurs at residues Cys6, Cys7, and Cys10. A helical membrane pass occupies residues 11–36 (LIGAPFASLVATGLCFFGVALFCGCG). The Extracellular segment spans residues 37–59 (HEALTGTEQLIETYFSKNYQDYE). Residues 60-88 (FLIDVIHGFQYFIYGTAAFFFLYGALLLA) traverse the membrane as a helical segment. Residues 89-151 (EGFYTTGAVR…LGKWLGHPDK (63 aa)) are Cytoplasmic-facing. Residues Cys109, Cys139, and Cys141 are each lipidated (S-palmitoyl cysteine). Residues 152 to 178 (FVGITYVLTIIWLLVFACSAVPVYIYF) form a helical membrane-spanning segment. At 179 to 238 (NTWTTCQSIGNPTKTSASIGTLCADARMYGILPWNAFPGKVCGSNLLSICKTSEFQMTFH) the chain is on the extracellular side. 2 disulfides stabilise this stretch: Cys184/Cys228 and Cys201/Cys220. Thr199 carries the O-palmitoyl threonine lipid modification. The helical transmembrane segment at 239–268 (LFIAAFVGAAATLVSLVTFIIATTYNFAVL) threads the bilayer. Topologically, residues 269–277 (RLMGRGTKF) are cytoplasmic.

This sequence belongs to the myelin proteolipid protein family.

It localises to the cell membrane. Its function is as follows. This is the major myelin protein from the central nervous system. It plays an important role in the formation or maintenance of the multilamellar structure of myelin. This Taeniopygia guttata (Zebra finch) protein is Myelin proteolipid protein (PLP1).